A 139-amino-acid polypeptide reads, in one-letter code: D-ribose pyranase (139 aa).

Catalysis depends on histidine 20, which acts as the Proton donor. Substrate is bound by residues aspartate 28, histidine 106, and 128-130 (YAN).

The protein belongs to the RbsD / FucU family. RbsD subfamily. As to quaternary structure, homodecamer.

The protein resides in the cytoplasm. The catalysed reaction is beta-D-ribopyranose = beta-D-ribofuranose. The protein operates within carbohydrate metabolism; D-ribose degradation; D-ribose 5-phosphate from beta-D-ribopyranose: step 1/2. Catalyzes the interconversion of beta-pyran and beta-furan forms of D-ribose. In Actinobacillus pleuropneumoniae serotype 7 (strain AP76), this protein is D-ribose pyranase.